We begin with the raw amino-acid sequence, 602 residues long: Sodium-independent sulfate anion transporter (602 aa).

The Extracellular portion of the chain corresponds to 1 to 47; the sequence is MSPPMSPMKPPKGFAPMSCCWSTETMQKWLPFLGWLPDYTWYALKMD. A helical transmembrane segment spans residues 48–68; it reads FIAGISVGLTVIPQALAYAEV. Residue Ala-69 is a topological domain, cytoplasmic. Residues 70–90 form a helical membrane-spanning segment; sequence GLPPQYGLYSAFMGCFVYFFL. Residues 91–115 are Extracellular-facing; that stretch reads GTSRDVTLGPTAIMSLLVSFYTFHE. A helical transmembrane segment spans residues 116–136; that stretch reads PAYAVLLAFLTGCIQLGMGFL. The Cytoplasmic segment spans residues 137–143; it reads RLGLLLD. Residues 144 to 164 traverse the membrane as a helical segment; it reads FISCPVIKGFTSAAAIIIGFG. Residues 165–193 are Extracellular-facing; that stretch reads QIKNLLGLQHIPRQFFLQVYYTFHNIGET. The helical transmembrane segment at 194–214 threads the bilayer; the sequence is RVGDAVLGLVCMVLLLVLKLM. The Cytoplasmic segment spans residues 215–246; that stretch reads RDHVPPVHPEMPTGVRLSHGLVWTATTARNAL. The chain crosses the membrane as a helical span at residues 247-267; the sequence is VVSFAALVAYSFQVTGYQPFV. The Extracellular segment spans residues 268–300; that stretch reads LTGKTPEGLPDAHIPPFSVTTANGTISFTEMVQ. Residues 301 to 321 traverse the membrane as a helical segment; sequence GMGAGLVVVPLMGLLESIAVA. Over 322–337 the chain is Cytoplasmic; that stretch reads KSFASQNNYRINSNQE. Residues 338–358 traverse the membrane as a helical segment; that stretch reads LLALGFTNILGSLFSSYPVTG. Over 359-370 the chain is Extracellular; that stretch reads SFGRTAVNAQSG. Residues 371-391 form a helical membrane-spanning segment; it reads VCTPAGGLMTGALVLLSLDYL. Over 392 to 394 the chain is Cytoplasmic; sequence TSL. The chain crosses the membrane as a helical span at residues 395–415; sequence FYYIPKSALAAVIIMAVVPLF. Residues 416–438 are Extracellular-facing; that stretch reads DTKIVKTLWRVKRLDLLPLCVTF. A helical membrane pass occupies residues 439–459; that stretch reads LLCFWEVQYGILAGTLVSVLI. The Cytoplasmic segment spans residues 460 to 602; the sequence is LLHSVARPKI…PEHKIALLKA (143 aa). Residues 466-580 form the STAS domain; sequence RPKIQVSEGP…EAEKYLKQEP (115 aa).

This sequence belongs to the SLC26A/SulP transporter (TC 2.A.53) family.

It is found in the cell membrane. Its subcellular location is the lysosome membrane. The protein resides in the apical cell membrane. It localises to the basolateral cell membrane. The enzyme catalyses hydrogencarbonate(in) + chloride(out) = hydrogencarbonate(out) + chloride(in). It carries out the reaction sulfate(in) + H(+)(in) = sulfate(out) + H(+)(out). The catalysed reaction is oxalate(in) + chloride(out) = oxalate(out) + chloride(in). Sodium-independent anion exchanger mediating bicarbonate, chloride, sulfate and oxalate transport. Exhibits sodium-independent sulfate anion transporter activity that may cooperate with SLC26A2 to mediate DIDS-sensitive sulfate uptake into high endothelial venules endothelial cells (HEVEC). In the kidney, mediates chloride-bicarbonate exchange, facilitating V-ATPase-mediated acid secretion. May function as a chloride channel, playing an important role in moderating chloride homeostasis and neuronal activity in the cerebellum. The polypeptide is Sodium-independent sulfate anion transporter (Bos taurus (Bovine)).